A 612-amino-acid chain; its full sequence is MSAELIAVYKDEQIIDLESAKVLGLSDGVKALNGTEPIYFDDSPLALEVIRHSCAHLLAQSLKALYPDAKFFVGPVVEEGFYYDFKTASKISEEDLPKIEAKMKEFAKLKLAITKEVLTREQALERFKGDELKHAVMSKISGDKFGVYQQGEFEDLCKGPHLPNTRFLNHFKLTKLAGAYLGGDENNEMLIRIYGIAFATKEGLKDYLFQIEEAKKRNHRKLGVELGLFSFDDEIGAGLPLWLPKGARLRKRIEDLLSKALLLRGYEPVKGPEILKSDVWKISGHYDNYKENMYFTTIDEQEYGIKPMNCVGHIKVYQSALHSYRDLPLRFYEYGVVHRHEKSGVLHGLLRVREFTQDDAHIFCSFEQIQSEVSAILDFTHKIMQAFDFSYEMELSTRPAKSIGDDKVWEKATNALKEALKEHRIDYKIDEGGGAFYGPKIDIKITDALKRKWQCGTIQVDMNLPERFKLAFTNEHNHAEQPVMIHRAILGSFERFIAILSEHFGGNFPFFVAPTQIALIPINEEHHVFALKLKEALKKRDIFVEVLDKNDSLNKKVRLAEKQKIPMILVLGNEEVETEILSIRDREKQAQYKMPLKEFLNMVESKMQEVSF.

The interval 218-509 is catalytic; sequence NHRKLGVELG…LSEHFGGNFP (292 aa). Residues cysteine 310, histidine 361, and histidine 486 each contribute to the Zn(2+) site.

This sequence belongs to the class-II aminoacyl-tRNA synthetase family. In terms of assembly, homodimer. Zn(2+) serves as cofactor.

Its subcellular location is the cytoplasm. The catalysed reaction is tRNA(Thr) + L-threonine + ATP = L-threonyl-tRNA(Thr) + AMP + diphosphate + H(+). Catalyzes the attachment of threonine to tRNA(Thr) in a two-step reaction: L-threonine is first activated by ATP to form Thr-AMP and then transferred to the acceptor end of tRNA(Thr). Also edits incorrectly charged L-seryl-tRNA(Thr). The polypeptide is Threonine--tRNA ligase (Helicobacter pylori (strain Shi470)).